The primary structure comprises 26 residues: M-lycotoxin-Ls2a (26 aa).

In terms of tissue distribution, expressed by the venom gland.

The protein resides in the secreted. The protein localises to the target cell membrane. Functionally, forms pore that permeabilize the cell membrane. Promotes efflux of calcium from synaptosomes, causes hemolysis, and dissipates voltage gradients across muscle membrane. Potently inhibits the growth of bacteria and yeast. May function both in the prey capture strategy as well as protection from infectious organisms arising from prey ingestion. The sequence is that of M-lycotoxin-Ls2a from Lycosa singoriensis (Wolf spider).